The following is a 218-amino-acid chain: MIP18 family protein galla-1 (218 aa).

Residues M1–E59 are disordered. Positions S12–G27 are enriched in low complexity. S14 is subject to Phosphoserine. Residues G28–G37 show a composition bias toward gly residues. The span at S38–S54 shows a compositional bias: low complexity. Phosphoserine is present on S65.

This sequence belongs to the MIP18 family. In terms of assembly, component of the CGX complex composed of crb, galla (galla-1 or galla-2) and Xpd. Interacts with crb (via intracellular domain). Is not able to interact with Xpd in the absence of crb.

Its subcellular location is the apical cell membrane. The protein localises to the cytoplasm. It localises to the cytoskeleton. It is found in the spindle. Functionally, component of the crb-galla-Xpd (CGX) complex which is essential for proper mitotic chromosome segregation in early embryos. The CGX complex is also required for cell proliferation in developing wing disks. In the CGX complex, acts with crb to recruit Xpd thus forming the functional complex. In Drosophila melanogaster (Fruit fly), this protein is MIP18 family protein galla-1.